A 238-amino-acid polypeptide reads, in one-letter code: ATP synthase subunit a (238 aa).

5 consecutive transmembrane segments (helical) span residues 18-38 (LTIL…VFWA), 75-95 (YSLL…LGLM), 112-132 (NFGV…IEGI), 179-199 (VVTG…PLAF), and 203-223 (IVWT…FIIL).

The protein belongs to the ATPase A chain family. F-type ATPases have 2 components, CF(1) - the catalytic core - and CF(0) - the membrane proton channel. CF(1) has five subunits: alpha(3), beta(3), gamma(1), delta(1), epsilon(1). CF(0) has three main subunits: a(1), b(2) and c(9-12). The alpha and beta chains form an alternating ring which encloses part of the gamma chain. CF(1) is attached to CF(0) by a central stalk formed by the gamma and epsilon chains, while a peripheral stalk is formed by the delta and b chains.

The protein resides in the cell membrane. Its function is as follows. Key component of the proton channel; it plays a direct role in the translocation of protons across the membrane. The polypeptide is ATP synthase subunit a (Streptococcus agalactiae serotype Ia (strain ATCC 27591 / A909 / CDC SS700)).